The sequence spans 555 residues: Formate--tetrahydrofolate ligase (555 aa).

65–72 is an ATP binding site; sequence TPAGEGKS.

The protein belongs to the formate--tetrahydrofolate ligase family.

It catalyses the reaction (6S)-5,6,7,8-tetrahydrofolate + formate + ATP = (6R)-10-formyltetrahydrofolate + ADP + phosphate. Its pathway is one-carbon metabolism; tetrahydrofolate interconversion. This is Formate--tetrahydrofolate ligase from Staphylococcus aureus (strain USA300).